Consider the following 287-residue polypeptide: Protease HtpX (287 aa).

The next 2 helical transmembrane spans lie at 4-24 and 33-53; these read IFLLIATNMAILLVASIVMSI and GGLLVFAAIFGFGGAFISLAI. His139 contacts Zn(2+). Glu140 is an active-site residue. His143 is a binding site for Zn(2+). Helical transmembrane passes span 154-174 and 195-215; these read LIQGVVNTFVIFAARVVAGII and AVVFVLDMLFGILASMIVAYF. Glu220 serves as a coordination point for Zn(2+).

This sequence belongs to the peptidase M48B family. It depends on Zn(2+) as a cofactor.

The protein localises to the cell inner membrane. The polypeptide is Protease HtpX (Shewanella pealeana (strain ATCC 700345 / ANG-SQ1)).